Consider the following 158-residue polypeptide: Anaerobic nitrite reductase AHB2 (158 aa).

The Globin domain maps to G5–K154. A Homodimerization motif is present at residues E38 to A42. Positions 48, 62, 66, and 101 each coordinate heme b. A Homodimerization motif is present at residues D108–R120.

The protein belongs to the plant globin family. As to quaternary structure, unable to dimerize. Requires heme b as cofactor. Expressed in rosette leaves but not in roots.

It is found in the cytoplasm. It localises to the nucleus. It carries out the reaction Fe(III)-heme b-[protein] + nitric oxide + H2O = Fe(II)-heme b-[protein] + nitrite + 2 H(+). Functionally, phytoglobin that reduces nitrite to nitric oxide (NO) under anoxic conditions (e.g. during flooding or in waterlogged soil). May not function as an oxygen storage or transport protein. Has an unusually high affinity for O(2) through an hexacoordinate heme iron because of a very low dissociation constant. This Arabidopsis thaliana (Mouse-ear cress) protein is Anaerobic nitrite reductase AHB2.